A 466-amino-acid polypeptide reads, in one-letter code: MSIASVASVFKGEHAVGSKVTVRGWVRTRRDSKAGISFLAVYDGSCFNPIQGVVPNSLDNYDNEVLKLTAGCSVVMTGDVVESPGAGQAFELQVTELEVAGWVDDPDTYPMAAKRHSIEHLRELAHLRPRTNIIGAVARVRNCLSQAIHRFYHEEGFIWVSTPLITASDCEGAGEMFRVSTLDMENLPRTDAGKVDYDKDFFGKEAFLTVSGQLNAETYACALSKVYTFGPTFRAENSNTSRHLAEFWMVEPEVAFANLNDIAGLAEAMLKYAFNAVLTERMDDLTFFAQHVDKTVIDRLQSFVSSDFAQVDYTDAVEILQNCGRTFEFPVSWGIDLSSEHERYLAEEHFKAPVVVKNYPKDIKAFYMRLNDDGKTVAAMDVLAPGIGEIIGGSQREERLDVLDMRLAEMDLNQEDYWWYRDMRRYGTVPHAGFGLGFERLVSYVTGVNNIRDVIPFPRAPRTANF.

This sequence belongs to the class-II aminoacyl-tRNA synthetase family. Homodimer.

Its subcellular location is the cytoplasm. It carries out the reaction tRNA(Asn) + L-asparagine + ATP = L-asparaginyl-tRNA(Asn) + AMP + diphosphate + H(+). The sequence is that of Asparagine--tRNA ligase from Shewanella baltica (strain OS195).